The following is a 280-amino-acid chain: 4-hydroxy-tetrahydrodipicolinate reductase (280 aa).

Residues 14–19, aspartate 40, 106–108, and 130–133 contribute to the NAD(+) site; these read GAAGRM, ATT, and APSM. The active-site Proton donor/acceptor is the histidine 166. A (S)-2,3,4,5-tetrahydrodipicolinate-binding site is contributed by histidine 167. Residue lysine 170 is the Proton donor of the active site. 176–177 serves as a coordination point for (S)-2,3,4,5-tetrahydrodipicolinate; sequence GT.

This sequence belongs to the DapB family.

The protein resides in the cytoplasm. It carries out the reaction (S)-2,3,4,5-tetrahydrodipicolinate + NAD(+) + H2O = (2S,4S)-4-hydroxy-2,3,4,5-tetrahydrodipicolinate + NADH + H(+). It catalyses the reaction (S)-2,3,4,5-tetrahydrodipicolinate + NADP(+) + H2O = (2S,4S)-4-hydroxy-2,3,4,5-tetrahydrodipicolinate + NADPH + H(+). It participates in amino-acid biosynthesis; L-lysine biosynthesis via DAP pathway; (S)-tetrahydrodipicolinate from L-aspartate: step 4/4. In terms of biological role, catalyzes the conversion of 4-hydroxy-tetrahydrodipicolinate (HTPA) to tetrahydrodipicolinate. The sequence is that of 4-hydroxy-tetrahydrodipicolinate reductase from Rhodopirellula baltica (strain DSM 10527 / NCIMB 13988 / SH1).